Reading from the N-terminus, the 813-residue chain is LPS-assembly protein LptD (813 aa).

The interval 1 to 29 (MTEQRRSPNNRALPSPAPTSVPARARRAG) is disordered. A signal peptide spans 1-52 (MTEQRRSPNNRALPSPAPTSVPARARRAGGLHAGALRPLVLAMASLSAGAHA).

It belongs to the LptD family. As to quaternary structure, component of the lipopolysaccharide transport and assembly complex. Interacts with LptE and LptA.

It is found in the cell outer membrane. In terms of biological role, together with LptE, is involved in the assembly of lipopolysaccharide (LPS) at the surface of the outer membrane. The protein is LPS-assembly protein LptD of Cupriavidus necator (strain ATCC 17699 / DSM 428 / KCTC 22496 / NCIMB 10442 / H16 / Stanier 337) (Ralstonia eutropha).